A 638-amino-acid chain; its full sequence is Methionine--tRNA ligase (638 aa).

Residues 12–22 (YYPSDKLHIGH) carry the 'HIGH' region motif. 4 residues coordinate Zn(2+): Cys-127, Cys-130, Cys-144, and Cys-147. The short motif at 296-300 (KMSKS) is the 'KMSKS' region element. Lys-299 is a binding site for ATP. The tRNA-binding domain occupies 538–638 (DFSKVQLRVA…KDIESGSKIS (101 aa)).

Belongs to the class-I aminoacyl-tRNA synthetase family. MetG type 2A subfamily. Homodimer. It depends on Zn(2+) as a cofactor.

It localises to the cytoplasm. The enzyme catalyses tRNA(Met) + L-methionine + ATP = L-methionyl-tRNA(Met) + AMP + diphosphate. Is required not only for elongation of protein synthesis but also for the initiation of all mRNA translation through initiator tRNA(fMet) aminoacylation. The sequence is that of Methionine--tRNA ligase (metG) from Caldanaerobacter subterraneus subsp. tengcongensis (strain DSM 15242 / JCM 11007 / NBRC 100824 / MB4) (Thermoanaerobacter tengcongensis).